The sequence spans 158 residues: RNA pyrophosphohydrolase (158 aa).

The 144-residue stretch at 6–149 folds into the Nudix hydrolase domain; the sequence is GYRLNVGIVL…KRHVYRKVMK (144 aa). The short motif at 38 to 59 is the Nudix box element; that stretch reads GGINIGETPEQAMYRELFEEIG.

This sequence belongs to the Nudix hydrolase family. RppH subfamily. Requires a divalent metal cation as cofactor.

Its function is as follows. Accelerates the degradation of transcripts by removing pyrophosphate from the 5'-end of triphosphorylated RNA, leading to a more labile monophosphorylated state that can stimulate subsequent ribonuclease cleavage. The sequence is that of RNA pyrophosphohydrolase from Blochmanniella floridana.